The chain runs to 237 residues: uncharacterized protein (237 aa).

A GP-PDE domain is found at 4–237 (QFLIAHRGYS…VKFQIAAQLY (234 aa)).

To glycerophosphoryl diester phosphodiesterases (EC 3.1.4.46). This sequence to M.genitalium MG293.

This is an uncharacterized protein from Mycoplasma pneumoniae (strain ATCC 29342 / M129 / Subtype 1) (Mycoplasmoides pneumoniae).